Reading from the N-terminus, the 1571-residue chain is Phosphatidylinositol 3-kinase 1 (1571 aa).

A compositionally biased stretch (low complexity) spans 1 to 73 (MNSIESSSND…NNDNNNNNNN (73 aa)). Disordered stretches follow at residues 1–119 (MNSI…HVNN), 157–195 (GYDV…RTRN), and 283–430 (NSKL…IIKR). Positions 74-85 (IDKKRKDSKNKQ) are enriched in basic and acidic residues. Residues 101–119 (NSNDSNCSSGSSSGGHVNN) are compositionally biased toward low complexity. Over residues 283–292 (NSKLDTEEKP) the composition is skewed to basic and acidic residues. Residues 294-324 (TTTTTTTTTSTSISTSTPTTTTTTTTNTSTT) are compositionally biased toward low complexity. A compositionally biased stretch (polar residues) spans 325-337 (NDITIKPKTSPTK). 2 stretches are compositionally biased toward low complexity: residues 360–382 (KVST…PTGK) and 405–424 (NNTN…NNNN). The 98-residue stretch at 530-627 (IKTSFNILFL…IPKLKVIEKS (98 aa)) folds into the PI3K-ABD domain. The PI3K-RBD domain occupies 700–789 (GNKILISIFL…GTKPQLTLIQ (90 aa)). Positions 851 to 1020 (IKKPFRVKVM…GLTLEFEEFN (170 aa)) constitute a C2 PI3K-type domain. In terms of domain architecture, PIK helical spans 1040-1216 (QPPTNINSNE…GILLESYLYA (177 aa)). Residues 1280–1558 (IINKSKYMDS…LIHESLATKT (279 aa)) form the PI3K/PI4K catalytic domain. The tract at residues 1286-1292 (YMDSKKL) is G-loop. Residues 1424-1432 (GIGDRHNDN) are catalytic loop. An activation loop region spans residues 1443-1469 (HIDFGHFLGNYKKKFGFKRERAPFVFT).

This sequence belongs to the PI3/PI4-kinase family.

The catalysed reaction is a 1,2-diacyl-sn-glycero-3-phospho-(1D-myo-inositol) + ATP = a 1,2-diacyl-sn-glycero-3-phospho-(1D-myo-inositol-3-phosphate) + ADP + H(+). The polypeptide is Phosphatidylinositol 3-kinase 1 (pikA) (Dictyostelium discoideum (Social amoeba)).